The following is a 304-amino-acid chain: Glutamyl-Q tRNA(Asp) synthetase (304 aa).

Residues 14–18 (RFAPS) and Glu50 each bind L-glutamate. A 'HIGH' region motif is present at residues 17–27 (PSPSGPLHFGS). The Zn(2+) site is built by Cys106, Cys108, Tyr120, and Cys124. L-glutamate is bound by residues Tyr178 and Arg196. A 'KMSKS' region motif is present at residues 234–238 (KLSKQ). Lys237 is a binding site for ATP.

Belongs to the class-I aminoacyl-tRNA synthetase family. GluQ subfamily. Zn(2+) serves as cofactor.

Functionally, catalyzes the tRNA-independent activation of glutamate in presence of ATP and the subsequent transfer of glutamate onto a tRNA(Asp). Glutamate is transferred on the 2-amino-5-(4,5-dihydroxy-2-cyclopenten-1-yl) moiety of the queuosine in the wobble position of the QUC anticodon. This is Glutamyl-Q tRNA(Asp) synthetase from Vibrio cholerae serotype O1 (strain ATCC 39315 / El Tor Inaba N16961).